Reading from the N-terminus, the 421-residue chain is Subtilisin-like protease 2 (421 aa).

An N-terminal signal peptide occupies residues 1–16 (MQLLNFGLLLLPFVAG). Residues 17-122 (DLAPQPEPLL…VHPDQHVYLA (106 aa)) constitute a propeptide that is removed on maturation. One can recognise an Inhibitor I9 domain in the interval 36–122 (QYIVTLKEGL…VHPDQHVYLA (87 aa)). The Peptidase S8 domain occupies 131-421 (RWGLGYMSSK…ERKFTLPKYF (291 aa)). Active-site charge relay system residues include Asp169 and His201. N-linked (GlcNAc...) asparagine glycans are attached at residues Asn248, Asn261, and Asn348. Ser357 acts as the Charge relay system in catalysis. N-linked (GlcNAc...) asparagine glycosylation is present at Asn388.

It belongs to the peptidase S8 family.

The protein resides in the secreted. Functionally, secreted subtilisin-like serine protease with keratinolytic activity that contributes to pathogenicity. In Trichophyton tonsurans (Scalp ringworm fungus), this protein is Subtilisin-like protease 2 (SUB2).